The primary structure comprises 328 residues: RNA-binding motif protein, X-linked 2 (328 aa).

Residue K8 forms a Glycyl lysine isopeptide (Lys-Gly) (interchain with G-Cter in SUMO2) linkage. The RRM domain occupies 36-114 (AWIFLGGLPY…RTIRVDHVAN (79 aa)). Positions 118-328 (PQESEDVDDV…SFHASDRRHY (211 aa)) are disordered. T140 is subject to Phosphothreonine. Phosphoserine is present on S149. Basic residues predominate over residues 157 to 172 (TKKPKKDKKEKKKKKE). 3 stretches are compositionally biased toward basic and acidic residues: residues 192–219 (TVKE…ECRE), 236–247 (GRAEEPEWEAKK), and 255–273 (KPSS…DRGR). K246 is covalently cross-linked (Glycyl lysine isopeptide (Lys-Gly) (interchain with G-Cter in SUMO2)). The residue at position 274 (S274) is a Phosphoserine. Positions 291-314 (HRSRSRSRSRSPDRSHRHKKHRYS) are enriched in basic residues. Over residues 315–328 (HERESFHASDRRHY) the composition is skewed to basic and acidic residues.

Belongs to the IST3 family. In terms of assembly, part of the activated spliceosome B/catalytic step 1 spliceosome, one of the forms of the spliceosome which has a well-formed active site but still cannot catalyze the branching reaction and is composed of at least 52 proteins, the U2, U5 and U6 snRNAs and the pre-mRNA. Component of the minor spliceosome, which splices U12-type introns.

It is found in the nucleus. Its function is as follows. Involved in pre-mRNA splicing as component of the activated spliceosome. As a component of the minor spliceosome, involved in the splicing of U12-type introns in pre-mRNAs. This Rattus norvegicus (Rat) protein is RNA-binding motif protein, X-linked 2 (Rbmx2).